Reading from the N-terminus, the 174-residue chain is Small heat shock protein OV25-1 (174 aa).

One can recognise a sHSP domain in the interval 50–161; that stretch reads LNECNIGNTL…ASRNIPIRAS (112 aa). Residues 153-174 form a disordered region; sequence SRNIPIRASPKEPEAKQKTKKQ. The span at 161 to 174 shows a compositional bias: basic and acidic residues; sequence SPKEPEAKQKTKKQ.

This sequence belongs to the small heat shock protein (HSP20) family.

In Onchocerca volvulus, this protein is Small heat shock protein OV25-1 (OV25-1).